Reading from the N-terminus, the 345-residue chain is Phosphoribosylformylglycinamidine cyclo-ligase (345 aa).

Belongs to the AIR synthase family.

The protein resides in the cytoplasm. It catalyses the reaction 2-formamido-N(1)-(5-O-phospho-beta-D-ribosyl)acetamidine + ATP = 5-amino-1-(5-phospho-beta-D-ribosyl)imidazole + ADP + phosphate + H(+). It participates in purine metabolism; IMP biosynthesis via de novo pathway; 5-amino-1-(5-phospho-D-ribosyl)imidazole from N(2)-formyl-N(1)-(5-phospho-D-ribosyl)glycinamide: step 2/2. This is Phosphoribosylformylglycinamidine cyclo-ligase from Bifidobacterium longum subsp. infantis (strain ATCC 15697 / DSM 20088 / JCM 1222 / NCTC 11817 / S12).